The primary structure comprises 122 residues: Large ribosomal subunit protein uL14c (122 aa).

Belongs to the universal ribosomal protein uL14 family. Part of the 50S ribosomal subunit.

Its subcellular location is the plastid. It localises to the chloroplast. Its function is as follows. Binds to 23S rRNA. The sequence is that of Large ribosomal subunit protein uL14c from Populus alba (White poplar).